The primary structure comprises 301 residues: PWI domain-containing protein C825.05c (301 aa).

The 112-residue stretch at 26-137 (STKFPASYDT…YGIPEKFILE (112 aa)) folds into the PWI domain. Position 86 is a phosphoserine (S86). Composition is skewed to basic and acidic residues over residues 145–182 (LKDR…ERNG), 189–205 (TLDR…ERNR), and 215–229 (RFSE…DIRS). Positions 145 to 301 (LKDRTEASKE…ESDSGTQKHD (157 aa)) are disordered. At S199 the chain carries Phosphoserine. The segment covering 244–253 (PTRRRERHYR) has biased composition (basic residues). Over residues 254–289 (TRDDEGFDEFGRSRDGRWRESRTSYREKHRYDRDAL) the composition is skewed to basic and acidic residues. Positions 290–301 (SSESDSGTQKHD) are enriched in polar residues. S291 carries the phosphoserine modification.

Its subcellular location is the nucleus. The protein is PWI domain-containing protein C825.05c of Schizosaccharomyces pombe (strain 972 / ATCC 24843) (Fission yeast).